Here is a 1233-residue protein sequence, read N- to C-terminus: DNA-directed RNA polymerase subunit beta' (1233 aa).

Zn(2+)-binding residues include Cys-61, Cys-63, Cys-76, and Cys-79. Mg(2+) is bound by residues Asp-455, Asp-457, and Asp-459. Zn(2+) contacts are provided by Cys-824, Cys-898, Cys-905, and Cys-908. Residues 1211-1220 (ELQKAFDKEP) are compositionally biased toward basic and acidic residues. A disordered region spans residues 1211 to 1233 (ELQKAFDKEPASSTGNKASNSAK). Positions 1221-1233 (ASSTGNKASNSAK) are enriched in polar residues.

This sequence belongs to the RNA polymerase beta' chain family. The RNAP catalytic core consists of 2 alpha, 1 beta, 1 beta' and 1 omega subunit. When a sigma factor is associated with the core the holoenzyme is formed, which can initiate transcription. Mg(2+) is required as a cofactor. Requires Zn(2+) as cofactor.

The enzyme catalyses RNA(n) + a ribonucleoside 5'-triphosphate = RNA(n+1) + diphosphate. In terms of biological role, DNA-dependent RNA polymerase catalyzes the transcription of DNA into RNA using the four ribonucleoside triphosphates as substrates. The polypeptide is DNA-directed RNA polymerase subunit beta' (Oenococcus oeni (strain ATCC BAA-331 / PSU-1)).